The primary structure comprises 581 residues: Proline--tRNA ligase (581 aa).

This sequence belongs to the class-II aminoacyl-tRNA synthetase family. ProS type 1 subfamily. As to quaternary structure, homodimer.

It is found in the cytoplasm. It carries out the reaction tRNA(Pro) + L-proline + ATP = L-prolyl-tRNA(Pro) + AMP + diphosphate. In terms of biological role, catalyzes the attachment of proline to tRNA(Pro) in a two-step reaction: proline is first activated by ATP to form Pro-AMP and then transferred to the acceptor end of tRNA(Pro). As ProRS can inadvertently accommodate and process non-cognate amino acids such as alanine and cysteine, to avoid such errors it has two additional distinct editing activities against alanine. One activity is designated as 'pretransfer' editing and involves the tRNA(Pro)-independent hydrolysis of activated Ala-AMP. The other activity is designated 'posttransfer' editing and involves deacylation of mischarged Ala-tRNA(Pro). The misacylated Cys-tRNA(Pro) is not edited by ProRS. In Chlamydia trachomatis serovar A (strain ATCC VR-571B / DSM 19440 / HAR-13), this protein is Proline--tRNA ligase.